Consider the following 203-residue polypeptide: Pyridoxine/pyridoxamine 5'-phosphate oxidase (203 aa).

Residues 50–55 (RMVLLK), 65–66 (YT), Lys-72, and Gln-94 each bind FMN. Lys-55 is a binding site for substrate. Tyr-112, Arg-116, and Ser-120 together coordinate substrate. Residues 129–130 (QS) and Trp-174 each bind FMN. 180–182 (RLH) is a binding site for substrate. Arg-184 contributes to the FMN binding site.

This sequence belongs to the pyridoxamine 5'-phosphate oxidase family. In terms of assembly, homodimer. FMN is required as a cofactor.

The catalysed reaction is pyridoxamine 5'-phosphate + O2 + H2O = pyridoxal 5'-phosphate + H2O2 + NH4(+). The enzyme catalyses pyridoxine 5'-phosphate + O2 = pyridoxal 5'-phosphate + H2O2. It participates in cofactor metabolism; pyridoxal 5'-phosphate salvage; pyridoxal 5'-phosphate from pyridoxamine 5'-phosphate: step 1/1. It functions in the pathway cofactor metabolism; pyridoxal 5'-phosphate salvage; pyridoxal 5'-phosphate from pyridoxine 5'-phosphate: step 1/1. Catalyzes the oxidation of either pyridoxine 5'-phosphate (PNP) or pyridoxamine 5'-phosphate (PMP) into pyridoxal 5'-phosphate (PLP). This Brucella anthropi (strain ATCC 49188 / DSM 6882 / CCUG 24695 / JCM 21032 / LMG 3331 / NBRC 15819 / NCTC 12168 / Alc 37) (Ochrobactrum anthropi) protein is Pyridoxine/pyridoxamine 5'-phosphate oxidase.